Here is a 261-residue protein sequence, read N- to C-terminus: Neurovirulence factor ICP34.5 (261 aa).

Residues 1 to 17 (MSRRRGPRRRGPRRRPR) show a composition bias toward basic residues. Residues 1 to 19 (MSRRRGPRRRGPRRRPRPG) are required for nucleolar localization. Disordered regions lie at residues 1–59 (MSRR…SAPA), 75–135 (DSDD…LALR), and 145–164 (RLSL…APRG). 4 repeats span residues 3–7 (RRRGP), 8–12 (RRRGP), 16–23 (PRPGAPAV), and 24–31 (PRPGAPAV). Residues 3–12 (RRRGPRRRGP) form a 2 X 5 AA tandem repeats of R-R-R-G-P region. Positions 16–31 (PRPGAPAVPRPGAPAV) are 2 X 8 AA tandem repeats of P-R-P-G-A-P-A-V. Residues 18-32 (PGAPAVPRPGAPAVP) show a composition bias toward pro residues. Over residues 75–88 (DSDDADYAGNDDAE) the composition is skewed to acidic residues. Residues 101–111 (APEAPHAAPAA) are compositionally biased toward low complexity. The Nuclear export signal signature appears at 128–137 (LPPHLALRLR). A binding to PP1CA region spans residues 163-176 (RGKVCFSPRVQVRH). The interval 163 to 176 (RGKVCFSPRVQVRH) is interaction with host PPP1CA. Residues 178-261 (VAWETAARLA…AAAGPGRRAV (84 aa)) are important for interferon resistance. The Bipartite nuclear localization signal signature appears at 188-206 (RRGSWARERADRDRFRRRV). Positions 206–221 (VAAAEAVIGPCLEPEA) are interaction with host EIF2S1/EIF-2ALPHA. A disordered region spans residues 223–261 (ARARARARAHEDGGPAEEEEAAAAARGSSAAAGPGRRAV). Over residues 244–261 (AAAARGSSAAAGPGRRAV) the composition is skewed to low complexity.

This sequence belongs to the PPP1R15 family. Interacts with host PPP1CA to form a high-molecular-weight complex that dephosphorylates EIF2S1/eIF-2alpha. Interacts with host EIF2S1/eIF-2alpha; this interaction is crucial for the specific dephosphorylation of EIF2S1/eIF-2alpha by PPP1CA.

Its subcellular location is the host cytoplasm. It localises to the host nucleus. The protein localises to the host nucleolus. The protein resides in the virion. Plays essential roles in viral nuclear egress to mediate capsid transit across the nuclear membrane and also in the inhibition of host immune response and integrated stress response (ISR). Facilitates nuclear egress cooperatively with host C1QBP and protein kinase C/PKC to induce lamin A/C phosphorylation and subsequent reorganization. In turn, lamina disassembles and nuclear egress occurs. Recruits the serine/threonine-protein phosphatase PPP1CA/PP1-alpha to dephosphorylate the translation initiation factor EIF2S1/eIF-2alpha, thereby couteracting the host shutoff of protein synthesis involving double-stranded RNA-dependent protein kinase EIF2AK2/PKR. Also down-modulates the host MHC class II proteins cell surface expression. Acts as a neurovirulence factor that has a profound effect on the growth of the virus in central nervous system tissue, probably through its ability to maintain an environment favorable for viral replication. This is Neurovirulence factor ICP34.5 (RL1) from Human herpesvirus 2 (strain HG52) (HHV-2).